Here is a 650-residue protein sequence, read N- to C-terminus: Putative polypeptide N-acetylgalactosaminyltransferase 9 (650 aa).

At 1–11 (MAFIWRRRSTT) the chain is on the cytoplasmic side. A helical; Signal-anchor for type II membrane protein transmembrane segment spans residues 12–31 (IVKLVAFALAIWFCIAFLVY). Topologically, residues 32-650 (TDDTRRRAAQ…TLENYDSSKL (619 aa)) are lumenal. Residues 84–154 (NVIGGGGQKQ…NPGELGKPVR (71 aa)) form a disordered region. Over residues 107–136 (HKADLQAERMRKKAAEQPKKKPQEDSKKVI) the composition is skewed to basic and acidic residues. 5 disulfides stabilise this stretch: Cys198–Cys432, Cys423–Cys499, Cys535–Cys554, Cys577–Cys590, and Cys616–Cys631. The segment at 208-317 (LPKTDVIICF…EGWLEPLLDR (110 aa)) is catalytic subdomain A. Substrate-binding residues include Cys216, Asp249, and Arg278. Residue Asp301 participates in Mn(2+) binding. Positions 302 and 303 each coordinate substrate. His303 is a Mn(2+) binding site. N-linked (GlcNAc...) asparagine glycans are attached at residues Asn321 and Asn373. A catalytic subdomain B region spans residues 378–440 (PVYSPTMAGG…PCSHVGHIFR (63 aa)). His437 contributes to the Mn(2+) binding site. Arg440 and Tyr445 together coordinate substrate. A Ricin B-type lectin domain is found at 521–643 (AHGEIRNLGY…SLSRQQWTLE (123 aa)).

It belongs to the glycosyltransferase 2 family. GalNAc-T subfamily. In terms of assembly, isoform A forms homotetramer. Isoform B forms homodimer. Mn(2+) serves as cofactor.

The protein localises to the golgi apparatus membrane. It catalyses the reaction L-seryl-[protein] + UDP-N-acetyl-alpha-D-galactosamine = a 3-O-[N-acetyl-alpha-D-galactosaminyl]-L-seryl-[protein] + UDP + H(+). The enzyme catalyses L-threonyl-[protein] + UDP-N-acetyl-alpha-D-galactosamine = a 3-O-[N-acetyl-alpha-D-galactosaminyl]-L-threonyl-[protein] + UDP + H(+). Its pathway is protein modification; protein glycosylation. In terms of biological role, catalyzes the initial reaction in O-linked oligosaccharide biosynthesis, the transfer of an N-acetyl-D-galactosamine residue to a serine or threonine residue on the protein receptor. It can both act as a peptide transferase that transfers GalNAc onto unmodified peptide substrates, and as a glycopeptide transferase that requires the prior addition of a GalNAc on a peptide before adding additional GalNAc moieties. N-acetylgalactosaminyltransferase which preferentially O-glycosylates negatively charge substrates. O-glycosylates mucin-like protein Sgs3 in the salivary gland but to a lesser extent than isoform B. By regulating the O-glycosylation of secretory cargo proteins plays a role in the morphology and maturation of salivary gland secretory granules. Functionally, N-acetylgalactosaminyltransferase which preferentially O-glycosylates positively charge substrates. O-glycosylates mucin-like protein Sgs3 in the salivary gland. By regulating the O-glycosylation of secretory cargo proteins, plays a role in the morphology and maturation of salivary gland secretory granules. This is Putative polypeptide N-acetylgalactosaminyltransferase 9 from Drosophila melanogaster (Fruit fly).